The chain runs to 102 residues: NADH-quinone oxidoreductase subunit K (102 aa).

The next 3 membrane-spanning stretches (helical) occupy residues 5 to 25 (LTQY…GIIL), 30 to 50 (IIII…NLVA), and 62 to 82 (IFAL…LAIL).

Belongs to the complex I subunit 4L family. In terms of assembly, NDH-1 is composed of 14 different subunits. Subunits NuoA, H, J, K, L, M, N constitute the membrane sector of the complex.

The protein localises to the cell inner membrane. The enzyme catalyses a quinone + NADH + 5 H(+)(in) = a quinol + NAD(+) + 4 H(+)(out). In terms of biological role, NDH-1 shuttles electrons from NADH, via FMN and iron-sulfur (Fe-S) centers, to quinones in the respiratory chain. The immediate electron acceptor for the enzyme in this species is believed to be ubiquinone. Couples the redox reaction to proton translocation (for every two electrons transferred, four hydrogen ions are translocated across the cytoplasmic membrane), and thus conserves the redox energy in a proton gradient. This is NADH-quinone oxidoreductase subunit K from Beijerinckia indica subsp. indica (strain ATCC 9039 / DSM 1715 / NCIMB 8712).